A 365-amino-acid chain; its full sequence is D-alanine--D-alanine ligase (365 aa).

In terms of domain architecture, ATP-grasp spans Lys-156–Glu-360. Lys-183–Glu-238 lines the ATP pocket. Mg(2+) contacts are provided by Asp-315, Glu-327, and Asn-329.

It belongs to the D-alanine--D-alanine ligase family. Requires Mg(2+) as cofactor. Mn(2+) is required as a cofactor.

It localises to the cytoplasm. It carries out the reaction 2 D-alanine + ATP = D-alanyl-D-alanine + ADP + phosphate + H(+). Its pathway is cell wall biogenesis; peptidoglycan biosynthesis. Its function is as follows. Cell wall formation. This Corynebacterium diphtheriae (strain ATCC 700971 / NCTC 13129 / Biotype gravis) protein is D-alanine--D-alanine ligase.